The sequence spans 480 residues: Methylenetetrahydrofolate--tRNA-(uracil-5-)-methyltransferase TrmFO (480 aa).

Residue 15–20 (GGGLAG) coordinates FAD.

The protein belongs to the MnmG family. TrmFO subfamily. Requires FAD as cofactor.

It localises to the cytoplasm. The enzyme catalyses uridine(54) in tRNA + (6R)-5,10-methylene-5,6,7,8-tetrahydrofolate + NADH + H(+) = 5-methyluridine(54) in tRNA + (6S)-5,6,7,8-tetrahydrofolate + NAD(+). It carries out the reaction uridine(54) in tRNA + (6R)-5,10-methylene-5,6,7,8-tetrahydrofolate + NADPH + H(+) = 5-methyluridine(54) in tRNA + (6S)-5,6,7,8-tetrahydrofolate + NADP(+). Catalyzes the folate-dependent formation of 5-methyl-uridine at position 54 (M-5-U54) in all tRNAs. The protein is Methylenetetrahydrofolate--tRNA-(uracil-5-)-methyltransferase TrmFO of Sinorhizobium medicae (strain WSM419) (Ensifer medicae).